The following is a 512-amino-acid chain: Cytoplasmic tRNA 2-thiolation protein 2-A (512 aa).

It belongs to the CTU2/NCS2 family.

The protein localises to the cytoplasm. It participates in tRNA modification; 5-methoxycarbonylmethyl-2-thiouridine-tRNA biosynthesis. Its function is as follows. Plays a central role in 2-thiolation of mcm(5)S(2)U at tRNA wobble positions of tRNA(Lys), tRNA(Glu) and tRNA(Gln). May act by forming a heterodimer with ctu1/atpbd3 that ligates sulfur from thiocarboxylated urm1 onto the uridine of tRNAs at wobble position. This chain is Cytoplasmic tRNA 2-thiolation protein 2-A (ctu2-a), found in Xenopus laevis (African clawed frog).